The chain runs to 704 residues: DNA-binding protein RFX2 (704 aa).

The interval 1–39 is disordered; that stretch reads MQNSEGGADSPASVALRPSAAAPPVPASPQRVLVQAASS. Positions 10-20 are enriched in low complexity; the sequence is SPASVALRPSA. A Phosphoserine modification is found at serine 28. The segment at residues 199 to 274 is a DNA-binding region (RFX-type winged-helix); it reads HLQWLLDNYE…YHYYGIRLKP (76 aa). The interval 292–334 is disordered; that stretch reads QQPMHQKPRYRPAQKTDSLGDSSSHSGLHSTPEQTTAAQNQHH. Residues 307-334 are compositionally biased toward low complexity; it reads TDSLGDSSSHSGLHSTPEQTTAAQNQHH. A Phosphoserine modification is found at serine 416.

The protein belongs to the RFX family. In terms of assembly, homodimer; probably only forms homodimers in testis. Heterodimer; heterodimerizes with RFX1 and RFX3.

The protein resides in the nucleus. The protein localises to the cytoplasm. Functionally, transcription factor that acts as a key regulator of spermatogenesis. Acts by regulating expression of genes required for the haploid phase during spermiogenesis, such as genes required for cilium assembly and function. Recognizes and binds the X-box, a regulatory motif with DNA sequence 5'-GTNRCC(0-3N)RGYAAC-3' present on promoters. Probably activates transcription of the testis-specific histone gene H1-6. The protein is DNA-binding protein RFX2 (RFX2) of Pongo abelii (Sumatran orangutan).